We begin with the raw amino-acid sequence, 451 residues long: UDP-N-acetylmuramoylalanine--D-glutamate ligase (451 aa).

ATP is bound at residue 119-125 (GSNGKTT).

This sequence belongs to the MurCDEF family.

It localises to the cytoplasm. It carries out the reaction UDP-N-acetyl-alpha-D-muramoyl-L-alanine + D-glutamate + ATP = UDP-N-acetyl-alpha-D-muramoyl-L-alanyl-D-glutamate + ADP + phosphate + H(+). Its pathway is cell wall biogenesis; peptidoglycan biosynthesis. In terms of biological role, cell wall formation. Catalyzes the addition of glutamate to the nucleotide precursor UDP-N-acetylmuramoyl-L-alanine (UMA). This Bacillus cytotoxicus (strain DSM 22905 / CIP 110041 / 391-98 / NVH 391-98) protein is UDP-N-acetylmuramoylalanine--D-glutamate ligase.